Here is a 282-residue protein sequence, read N- to C-terminus: Pantothenate synthetase (282 aa).

30–37 serves as a coordination point for ATP; it reads MGYLHEGH. His-37 acts as the Proton donor in catalysis. (R)-pantoate is bound at residue Gln-61. Gln-61 is a binding site for beta-alanine. Residue 147–150 coordinates ATP; that stretch reads GMKD. Gln-153 serves as a coordination point for (R)-pantoate. Residues Val-176 and 184–187 contribute to the ATP site; that span reads KSSR.

This sequence belongs to the pantothenate synthetase family. In terms of assembly, homodimer.

The protein resides in the cytoplasm. The enzyme catalyses (R)-pantoate + beta-alanine + ATP = (R)-pantothenate + AMP + diphosphate + H(+). It functions in the pathway cofactor biosynthesis; (R)-pantothenate biosynthesis; (R)-pantothenate from (R)-pantoate and beta-alanine: step 1/1. Its function is as follows. Catalyzes the condensation of pantoate with beta-alanine in an ATP-dependent reaction via a pantoyl-adenylate intermediate. This is Pantothenate synthetase from Bacillus cereus (strain G9842).